We begin with the raw amino-acid sequence, 683 residues long: Synaptic vesicle glycoprotein 2B (683 aa).

Residues 1–10 (MDDYRYRDNY) show a composition bias toward basic and acidic residues. The interval 1 to 72 (MDDYRYRDNY…QTKMAPSRAD (72 aa)) is disordered. Residues 1 to 110 (MDDYRYRDNY…ECGHGRFQWT (110 aa)) lie on the Cytoplasmic side of the membrane. Serine 33 carries the phosphoserine modification. Threonine 36 carries the post-translational modification Phosphothreonine. The helical transmembrane segment at 111 to 131 (LFFVLVLALMADGVEVFVVSF) threads the bilayer. The Extracellular portion of the chain corresponds to 132-148 (ALPSAEKDMCLSSSKKG). A helical membrane pass occupies residues 149-169 (MLGLIVYLGMMAGAFILGGLA). Residues 170 to 182 (DKLGRKKVLSMSL) are Cytoplasmic-facing. A helical transmembrane segment spans residues 183–203 (AINASFASLSSFVQGYGAFLF). At 204–205 (CR) the chain is on the extracellular side. Residues 206–226 (LISGIGIGGSLPIVFAYFSEF) traverse the membrane as a helical segment. The Cytoplasmic portion of the chain corresponds to 227-237 (LSREKRGEHLS). A helical membrane pass occupies residues 238–258 (WLGIFWMTGGIYASAMAWSII). The Extracellular portion of the chain corresponds to 259-277 (PHYGWGFSMGTNYHFHSWR). A helical membrane pass occupies residues 278–298 (VFVIVCALPATVSMVALKFMP). The Cytoplasmic portion of the chain corresponds to 299–390 (ESPRFLLEMG…CVMGPYRMNT (92 aa)). The chain crosses the membrane as a helical span at residues 391 to 411 (LILAVVWFTMALSYYGLTVWF). Topologically, residues 412–535 (PDMIRYFQDE…CHMDFEEDND (124 aa)) are extracellular. The residue at position 423 (tyrosine 423) is a Phosphotyrosine. N-linked (GlcNAc...) asparagine glycans are attached at residues asparagine 441, asparagine 491, and asparagine 516. The helical transmembrane segment at 536–556 (FLIYLVSFLGSLSVLPGNIIS) threads the bilayer. At 557–565 (ALLMDRIGR) the chain is on the cytoplasmic side. A helical transmembrane segment spans residues 566–586 (LKMIGGSMLISAVCCFFLFFG). Residues 587–592 (NSESAM) lie on the Extracellular side of the membrane. The helical transmembrane segment at 593–613 (IGWQCLFCGTSIAAWNALDVI) threads the bilayer. At 614 to 626 (TVELYPTNQRATA) the chain is on the cytoplasmic side. A helical membrane pass occupies residues 627-649 (FGILNGLCKLGAILGNTIFASFV). At 650–653 (GITK) the chain is on the extracellular side. Residues 654 to 672 (VVPILLAAASLVGGGLVAL) traverse the membrane as a helical segment. The Cytoplasmic segment spans residues 673-683 (RLPETREQVLM).

The protein belongs to the major facilitator superfamily. In terms of assembly, interacts with SYT1 in a calcium-independent manner. Forms a complex with SYT1, syntaxin-1 and SNAP25. (Microbial infection) Interacts with C.botulinum neurotoxin type A1 and type A2 (BoNT/A, botA). Interaction is improved by glycosylation of SV2. As to quaternary structure, (Microbial infection) Interacts with C.botulinum neurotoxin type D (BoNT/D, botD). In terms of assembly, (Microbial infection) Interacts with C.botulinum neurotoxin type E (BoNT/E). Interaction requires glycosylation of SV2 proteins. (Microbial infection) Interacts with C.botulinum neurotoxin type F (BoNT/F). Interaction requires glycosylation of SV2 proteins. Post-translationally, N-glycosylated. The N-terminal cytoplasmic domain is phosphorylated by CK1. In terms of tissue distribution, widely expressed throughout the brain. Specifically expressed by pinealocytes in the pineal gland. Also detected in testis (at protein level). Specifically expressed in neural tissues. Expressed in the spinal cord and in all brain regions with a stronger expression in hippocampus and cortex.

Its subcellular location is the cytoplasmic vesicle. The protein resides in the secretory vesicle. It localises to the synaptic vesicle membrane. The protein localises to the acrosome. Probably plays a role in the control of regulated secretion in neural and endocrine cells. Functionally, (Microbial infection) Receptor for C.botulinum neurotoxin type A (BoNT/A, botA); the toxin binds via extracellular loop 4. Restores uptake of BoNT/A in mouse and rat cells that are deleted for SV2 receptor. Glycosylation of SV2B is not essential for receptor activity, but enhances the interaction. Also serves as a receptor for the closely related C.botulinum neurotoxin type A2; glycosylation is not essential but enhances the interaction. In terms of biological role, (Microbial infection) Possible receptor for C.botulinum neurotoxin type D (BoNT/D, botD); BoNT/D does not bind to extracellular loop 4 as do BoNT/A and BoNT/E. Another group does not find a convincing interaction with SV2. Its function is as follows. (Microbial infection) Receptor for C.botulinum neurotoxin type E (BoNT/E); the toxin probably binds via extracellular loop 4. Restores uptake of BoNT/E in mouse cells that are deleted for SV2 receptor. Glycosylation of SV2B is not essential for receptor activity, but enhances the interaction. (Microbial infection) Receptor for C.botulinum neurotoxin type F (BoNT/F); binding requires glycosylation of this protein. This chain is Synaptic vesicle glycoprotein 2B (Sv2b), found in Rattus norvegicus (Rat).